A 193-amino-acid polypeptide reads, in one-letter code: Pyridoxal 5'-phosphate synthase subunit PdxT (193 aa).

48 to 50 lines the L-glutamine pocket; that stretch reads GES. Cys-80 acts as the Nucleophile in catalysis. L-glutamine contacts are provided by residues Arg-107 and 136 to 137; that span reads IR. Residues His-172 and Glu-174 each act as charge relay system in the active site.

This sequence belongs to the glutaminase PdxT/SNO family. In terms of assembly, in the presence of PdxS, forms a dodecamer of heterodimers. Only shows activity in the heterodimer.

The catalysed reaction is aldehydo-D-ribose 5-phosphate + D-glyceraldehyde 3-phosphate + L-glutamine = pyridoxal 5'-phosphate + L-glutamate + phosphate + 3 H2O + H(+). The enzyme catalyses L-glutamine + H2O = L-glutamate + NH4(+). The protein operates within cofactor biosynthesis; pyridoxal 5'-phosphate biosynthesis. In terms of biological role, catalyzes the hydrolysis of glutamine to glutamate and ammonia as part of the biosynthesis of pyridoxal 5'-phosphate. The resulting ammonia molecule is channeled to the active site of PdxS. This Clostridium botulinum (strain Loch Maree / Type A3) protein is Pyridoxal 5'-phosphate synthase subunit PdxT.